A 202-amino-acid polypeptide reads, in one-letter code: Pycsar effector protein PtPycTM (202 aa).

The next 3 helical transmembrane spans lie at 60-80 (GVVLAFVGVMAAGLITIAADI), 85-105 (LVILCIEGAAAVLILASAVLA), and 181-201 (ILVGMLGLVCLFVLAAGVALG).

It localises to the cell membrane. Functionally, pycsar (pyrimidine cyclase system for antiphage resistance) provides immunity against bacteriophage. The pyrimidine cyclase (PycC) synthesizes cyclic nucleotides in response to infection; these serve as specific second messenger signals. The signals activate the adjacent effector, leading to bacterial cell death and abortive phage infection. A clade D Pycsar system. Its function is as follows. The effector gene of a two-gene Pycsar system. Expression of this and adjacent uridylate cyclase PtPycC (AC A0A4V2JTK3) probably confers resistance to bacteriophage. The genes are probably only expressed in response to bacteriophage infection. Probably only responds to cUMP (produced by its cognate NTP cyclase), acts by impairing membrane integrity. This chain is Pycsar effector protein PtPycTM, found in Propioniciclava tarda.